Consider the following 418-residue polypeptide: Transmembrane protease serine 11A (418 aa).

The Cytoplasmic portion of the chain corresponds to 1 to 18 (MMYRTVGFGTRSRNLKPW). The helical; Signal-anchor for type II membrane protein transmembrane segment at 19-39 (MIAVLIVLSLTVVAVTIGLLV) threads the bilayer. At 40-418 (HFLVFDQKKE…RNWIASKTGI (379 aa)) the chain is on the extracellular side. In terms of domain architecture, SEA spans 47–164 (KKEYYHGSFK…SSVQVNAMSS (118 aa)). Asn153 carries an N-linked (GlcNAc...) asparagine glycan. The region spanning 187-417 (IASGVIAPKA…YRNWIASKTG (231 aa)) is the Peptidase S1 domain. A disulfide bond links Cys212 and Cys228. Active-site charge relay system residues include His227 and Asp272. N-linked (GlcNAc...) asparagine glycosylation is present at Asn303. 2 cysteine pairs are disulfide-bonded: Cys337–Cys353 and Cys364–Cys393. The Charge relay system role is filled by Ser368.

The protein belongs to the peptidase S1 family. As to quaternary structure, may interact with ZBTB17. As to expression, expressed in esophagus, liver, colon and lung. Down-regulated in esophagus cancers.

It localises to the membrane. Its function is as follows. Probable serine protease which may play a role in cellular senescence. Overexpression inhibits cell growth and induce G1 cell cycle arrest. This chain is Transmembrane protease serine 11A (TMPRSS11A), found in Homo sapiens (Human).